The following is a 114-amino-acid chain: FK506-binding protein 1 (114 aa).

Positions 26–114 (GDLVTIHYTG…IFEVELLKVN (89 aa)) constitute a PPIase FKBP-type domain.

The protein belongs to the FKBP-type PPIase family. FKBP1 subfamily.

The protein localises to the cytoplasm. It carries out the reaction [protein]-peptidylproline (omega=180) = [protein]-peptidylproline (omega=0). Inhibited by both FK506 and rapamycin. PPIases accelerate the folding of proteins. It catalyzes the cis-trans isomerization of proline imidic peptide bonds in oligopeptides. In Eremothecium gossypii (strain ATCC 10895 / CBS 109.51 / FGSC 9923 / NRRL Y-1056) (Yeast), this protein is FK506-binding protein 1 (FPR1).